Reading from the N-terminus, the 181-residue chain is Adenine phosphoribosyltransferase (181 aa).

This sequence belongs to the purine/pyrimidine phosphoribosyltransferase family. As to quaternary structure, homodimer.

It is found in the cytoplasm. The catalysed reaction is AMP + diphosphate = 5-phospho-alpha-D-ribose 1-diphosphate + adenine. Its pathway is purine metabolism; AMP biosynthesis via salvage pathway; AMP from adenine: step 1/1. Its function is as follows. Catalyzes a salvage reaction resulting in the formation of AMP, that is energically less costly than de novo synthesis. This is Adenine phosphoribosyltransferase from Vibrio cholerae serotype O1 (strain ATCC 39541 / Classical Ogawa 395 / O395).